We begin with the raw amino-acid sequence, 147 residues long: MPGVTVKDVNQQEFVRALAAFLKKSGKLKVPDWVDLVKLGRHKELAPSDENWFYIRAASTVRHLYLRGGAGVGSMTKIYGGRQRNGVCPAHYSEGSKNVARKVLQALELLKMIEKDPNGGRRLTAQGTRDLDRIAGQVSAASKKIVQ.

This sequence belongs to the eukaryotic ribosomal protein eS19 family. As to quaternary structure, component of the small ribosomal subunit.

It localises to the cytoplasm. The protein localises to the nucleus. In terms of biological role, component of the small ribosomal subunit. The ribosome is a large ribonucleoprotein complex responsible for the synthesis of proteins in the cell. Required for pre-rRNA processing and maturation of 40S ribosomal subunits. This chain is Small ribosomal subunit protein eS19 (rps19), found in Gillichthys mirabilis (Long-jawed mudsucker).